The chain runs to 275 residues: Ribosomal RNA small subunit methyltransferase A (275 aa).

Residues asparagine 28, leucine 30, glycine 55, glutamate 77, aspartate 103, and asparagine 123 each coordinate S-adenosyl-L-methionine.

This sequence belongs to the class I-like SAM-binding methyltransferase superfamily. rRNA adenine N(6)-methyltransferase family. RsmA subfamily.

It is found in the cytoplasm. The catalysed reaction is adenosine(1518)/adenosine(1519) in 16S rRNA + 4 S-adenosyl-L-methionine = N(6)-dimethyladenosine(1518)/N(6)-dimethyladenosine(1519) in 16S rRNA + 4 S-adenosyl-L-homocysteine + 4 H(+). In terms of biological role, specifically dimethylates two adjacent adenosines (A1518 and A1519) in the loop of a conserved hairpin near the 3'-end of 16S rRNA in the 30S particle. May play a critical role in biogenesis of 30S subunits. The chain is Ribosomal RNA small subunit methyltransferase A from Rhizobium johnstonii (strain DSM 114642 / LMG 32736 / 3841) (Rhizobium leguminosarum bv. viciae).